The chain runs to 428 residues: Light-independent protochlorophyllide reductase subunit N (428 aa).

The [4Fe-4S] cluster site is built by cysteine 29, cysteine 54, and cysteine 115.

Belongs to the BchN/ChlN family. In terms of assembly, protochlorophyllide reductase is composed of three subunits; BchL, BchN and BchB. Forms a heterotetramer of two BchB and two BchN subunits. It depends on [4Fe-4S] cluster as a cofactor.

The enzyme catalyses chlorophyllide a + oxidized 2[4Fe-4S]-[ferredoxin] + 2 ADP + 2 phosphate = protochlorophyllide a + reduced 2[4Fe-4S]-[ferredoxin] + 2 ATP + 2 H2O. The protein operates within porphyrin-containing compound metabolism; bacteriochlorophyll biosynthesis (light-independent). In terms of biological role, component of the dark-operative protochlorophyllide reductase (DPOR) that uses Mg-ATP and reduced ferredoxin to reduce ring D of protochlorophyllide (Pchlide) to form chlorophyllide a (Chlide). This reaction is light-independent. The NB-protein (BchN-BchB) is the catalytic component of the complex. The protein is Light-independent protochlorophyllide reductase subunit N of Roseobacter denitrificans (strain ATCC 33942 / OCh 114) (Erythrobacter sp. (strain OCh 114)).